A 364-amino-acid polypeptide reads, in one-letter code: Aminomethyltransferase (364 aa).

It belongs to the GcvT family. The glycine cleavage system is composed of four proteins: P, T, L and H.

The enzyme catalyses N(6)-[(R)-S(8)-aminomethyldihydrolipoyl]-L-lysyl-[protein] + (6S)-5,6,7,8-tetrahydrofolate = N(6)-[(R)-dihydrolipoyl]-L-lysyl-[protein] + (6R)-5,10-methylene-5,6,7,8-tetrahydrofolate + NH4(+). Its function is as follows. The glycine cleavage system catalyzes the degradation of glycine. The protein is Aminomethyltransferase of Geobacillus sp. (strain WCH70).